The following is a 224-amino-acid chain: Claudin-17 (224 aa).

Residues 1–7 (MAFYPLQ) are Cytoplasmic-facing. The helical transmembrane segment at 8-28 (IAGLVLGFLGMVGTLATTLLP) threads the bilayer. The Extracellular segment spans residues 29 to 81 (QWRVSAFVGSNIIVFERLWEGLWMNCIRQARVRLQCKFYSSLLALPPALETAR). Residues 82 to 102 (ALMCVAVALSLIALLIGICGM) form a helical membrane-spanning segment. Residues 103–124 (KQVQCTGSNERAKAYLLGTSGV) are Cytoplasmic-facing. The helical transmembrane segment at 125-145 (LFILTGIFVLIPVSWTANIII) threads the bilayer. The Extracellular segment spans residues 146-164 (RDFYNPAIHIGQKRELGAA). A helical transmembrane segment spans residues 165 to 185 (LFLGWASAAVLFIGGGLLCGF). The Cytoplasmic segment spans residues 186 to 224 (CCCNRKKQGYRYPVPGYRVPHTDKRRNTTMLSKTSTSYV).

The protein belongs to the claudin family. Cannot form tight junction strands on its own. Interacts with OCLN. In terms of tissue distribution, in the kidney, expressed in the proximal tubule and in the Henle's loop. In the distal convoluted tubule, not expressed in all tubules. Not detected in the collecting duct (at protein level).

The protein resides in the cell junction. Its subcellular location is the tight junction. It is found in the basolateral cell membrane. It catalyses the reaction chloride(in) = chloride(out). The catalysed reaction is hydrogencarbonate(in) = hydrogencarbonate(out). It carries out the reaction bromide(in) = bromide(out). The enzyme catalyses iodide(out) = iodide(in). It catalyses the reaction fluoride(in) = fluoride(out). The catalysed reaction is nitrate(in) = nitrate(out). It carries out the reaction thiocyanate(in) = thiocyanate(out). Channel-forming tight junction protein with selectivity for anions, including chloride and hydrogencarbonate, and for solutes smaller than 9 Angstrom in diameter. In the kidney proximal tubule, may be involved in paracellular reabsorption of filtered anions. Does not affect water permeability. The protein is Claudin-17 (CLDN17) of Homo sapiens (Human).